Reading from the N-terminus, the 181-residue chain is ATP-dependent protease subunit HslV (181 aa).

Residue Thr7 is part of the active site. The Na(+) site is built by Ala166, Cys169, and Thr172.

Belongs to the peptidase T1B family. HslV subfamily. A double ring-shaped homohexamer of HslV is capped on each side by a ring-shaped HslU homohexamer. The assembly of the HslU/HslV complex is dependent on binding of ATP.

The protein localises to the cytoplasm. The enzyme catalyses ATP-dependent cleavage of peptide bonds with broad specificity.. Allosterically activated by HslU binding. Its function is as follows. Protease subunit of a proteasome-like degradation complex believed to be a general protein degrading machinery. The sequence is that of ATP-dependent protease subunit HslV from Anaeromyxobacter sp. (strain Fw109-5).